The sequence spans 206 residues: Venom allergen 5 (206 aa).

Cystine bridges form between cysteine 5-cysteine 18, cysteine 9-cysteine 103, cysteine 28-cysteine 96, and cysteine 172-cysteine 189. Residues 47–191 (LKVHNDFRQK…WYTHYLVCNY (145 aa)) enclose the SCP domain.

Belongs to the CRISP family. Venom allergen 5-like subfamily. As to expression, expressed by the venom gland.

The protein resides in the secreted. The sequence is that of Venom allergen 5 from Vespula vidua (Ground hornet).